Reading from the N-terminus, the 332-residue chain is Phosphate acyltransferase (332 aa).

The protein belongs to the PlsX family. Homodimer. Probably interacts with PlsY.

It is found in the cytoplasm. The catalysed reaction is a fatty acyl-[ACP] + phosphate = an acyl phosphate + holo-[ACP]. It functions in the pathway lipid metabolism; phospholipid metabolism. Catalyzes the reversible formation of acyl-phosphate (acyl-PO(4)) from acyl-[acyl-carrier-protein] (acyl-ACP). This enzyme utilizes acyl-ACP as fatty acyl donor, but not acyl-CoA. This chain is Phosphate acyltransferase, found in Clostridium novyi (strain NT).